Here is a 157-residue protein sequence, read N- to C-terminus: Small ribosomal subunit protein uS7 (157 aa).

This sequence belongs to the universal ribosomal protein uS7 family. As to quaternary structure, part of the 30S ribosomal subunit. Contacts proteins S9 and S11.

In terms of biological role, one of the primary rRNA binding proteins, it binds directly to 16S rRNA where it nucleates assembly of the head domain of the 30S subunit. Is located at the subunit interface close to the decoding center, probably blocks exit of the E-site tRNA. The protein is Small ribosomal subunit protein uS7 of Borrelia garinii subsp. bavariensis (strain ATCC BAA-2496 / DSM 23469 / PBi) (Borreliella bavariensis).